Consider the following 258-residue polypeptide: Shikimate dehydrogenase (NADP(+)) (258 aa).

Shikimate is bound by residues 14 to 16 and threonine 61; that span reads SES. Residue lysine 65 is the Proton acceptor of the active site. Asparagine 86 and aspartate 101 together coordinate shikimate. NADP(+) contacts are provided by residues 125 to 129 and leucine 211; that span reads GSGGS. Residue tyrosine 213 coordinates shikimate. An NADP(+)-binding site is contributed by glycine 234.

Belongs to the shikimate dehydrogenase family. Homodimer.

It carries out the reaction shikimate + NADP(+) = 3-dehydroshikimate + NADPH + H(+). The protein operates within metabolic intermediate biosynthesis; chorismate biosynthesis; chorismate from D-erythrose 4-phosphate and phosphoenolpyruvate: step 4/7. Its function is as follows. Involved in the biosynthesis of the chorismate, which leads to the biosynthesis of aromatic amino acids. Catalyzes the reversible NADPH linked reduction of 3-dehydroshikimate (DHSA) to yield shikimate (SA). This Clostridium botulinum (strain ATCC 19397 / Type A) protein is Shikimate dehydrogenase (NADP(+)).